A 381-amino-acid chain; its full sequence is tRNA pseudouridine synthase D (381 aa).

D81 functions as the Nucleophile in the catalytic mechanism. The region spanning 160–335 is the TRUD domain; the sequence is GMPNYFGSQR…TLGSRRFFWV (176 aa).

Belongs to the pseudouridine synthase TruD family.

It carries out the reaction uridine(13) in tRNA = pseudouridine(13) in tRNA. Responsible for synthesis of pseudouridine from uracil-13 in transfer RNAs. This Helicobacter pylori (strain P12) protein is tRNA pseudouridine synthase D.